The following is a 355-amino-acid chain: UDP-N-acetylglucosamine--N-acetylmuramyl-(pentapeptide) pyrophosphoryl-undecaprenol N-acetylglucosamine transferase (355 aa).

Residues 15 to 17, N127, R163, S191, I244, 263 to 268, and Q288 each bind UDP-N-acetyl-alpha-D-glucosamine; these read TGG and ALTVSE.

It belongs to the glycosyltransferase 28 family. MurG subfamily.

The protein localises to the cell inner membrane. It carries out the reaction di-trans,octa-cis-undecaprenyl diphospho-N-acetyl-alpha-D-muramoyl-L-alanyl-D-glutamyl-meso-2,6-diaminopimeloyl-D-alanyl-D-alanine + UDP-N-acetyl-alpha-D-glucosamine = di-trans,octa-cis-undecaprenyl diphospho-[N-acetyl-alpha-D-glucosaminyl-(1-&gt;4)]-N-acetyl-alpha-D-muramoyl-L-alanyl-D-glutamyl-meso-2,6-diaminopimeloyl-D-alanyl-D-alanine + UDP + H(+). It functions in the pathway cell wall biogenesis; peptidoglycan biosynthesis. Functionally, cell wall formation. Catalyzes the transfer of a GlcNAc subunit on undecaprenyl-pyrophosphoryl-MurNAc-pentapeptide (lipid intermediate I) to form undecaprenyl-pyrophosphoryl-MurNAc-(pentapeptide)GlcNAc (lipid intermediate II). This chain is UDP-N-acetylglucosamine--N-acetylmuramyl-(pentapeptide) pyrophosphoryl-undecaprenol N-acetylglucosamine transferase, found in Salmonella typhi.